The following is a 332-amino-acid chain: Ribosomal RNA small subunit methyltransferase H (332 aa).

S-adenosyl-L-methionine contacts are provided by residues 38 to 40 (GGY), D56, F83, D104, and Q111. The interval 309 to 332 (TETPFSEDISRPDTHIPRSRRQSA) is disordered.

The protein belongs to the methyltransferase superfamily. RsmH family.

It localises to the cytoplasm. The enzyme catalyses cytidine(1402) in 16S rRNA + S-adenosyl-L-methionine = N(4)-methylcytidine(1402) in 16S rRNA + S-adenosyl-L-homocysteine + H(+). In terms of biological role, specifically methylates the N4 position of cytidine in position 1402 (C1402) of 16S rRNA. The polypeptide is Ribosomal RNA small subunit methyltransferase H (Zymomonas mobilis subsp. mobilis (strain ATCC 31821 / ZM4 / CP4)).